The following is a 762-amino-acid chain: MGNGSVKPKHSKHPDGHSGNLTTDALRNKVTELERELRRKDAEIQEREYHLKELREQLSKQTVAIAELTEELQNKCIQLNKLQDVVHMQGGSPLQASPDKVPLEVHRKTSGLVSLHSRRGAKAGVSAEPTTRTYDLNKPPEFSFEKARVRKDSSEKKLITDALNKNQFLKRLDPQQIKDMVECMYGRNYQQGSYIIKQGEPGNHIFVLAEGRLEVFQGEKLLSSIPMWTTFGELAILYNCTRTASVKAITNVKTWALDREVFQNIMRRTAQARDEQYRNFLRSVSLLKNLPEDKLTKIIDCLEVEYYDKGDYIIREGEEGSTFFILAKGKVKVTQSTEGHDQPQLIKTLQKGEYFGEKALISDDVRSANIIAEENDVACLVIDRETFNQTVGTFEELQKYLEGYVANLNRDDEKRHAKRSMSNWKLSKALSLEMIQLKEKVARFSSSSPFQNLEIIATLGVGGFGRVELVKVKNENVAFAMKCIRKKHIVDTKQQEHVYSEKRILEELCSPFIVKLYRTFKDNKYVYMLLEACLGGELWSILRDRGSFDEPTSKFCVACVTEAFDYLHRLGIIYRDLKPENLILDAEGYLKLVDFGFAKKIGSGQKTWTFCGTPEYVAPEVILNKGHDFSVDFWSLGILVYELLTGNPPFSGVDQMMTYNLILKGIEKMDFPRKITRRPEDLIRRLCRQNPTERLGNLKNGINDIKKHRWLNGFNWEGLKARSLPSPLQRELKGPIDHSYFDKYPPEKGMPPDELSGWDKDF.

Residues 1 to 25 are disordered; the sequence is MGNGSVKPKHSKHPDGHSGNLTTDA. A lipid anchor (N-myristoyl glycine) is attached at glycine 2. Positions 23–85 form a coiled coil; it reads TDALRNKVTE…CIQLNKLQDV (63 aa). Residues serine 110 and serine 117 each carry the phosphoserine modification. The segment at 117-138 is disordered; that stretch reads SRRGAKAGVSAEPTTRTYDLNK. The cGMP-binding, high affinity; cAMP-binding, moderate affinity stretch occupies residues 168–283; it reads FLKRLDPQQI…DEQYRNFLRS (116 aa). 3',5'-cyclic AMP is bound by residues 232–235 and 242–243; these read GELA and RT. Residues 232–235, 242–243, lysine 347, 356–359, 366–367, aspartate 412, and arginine 415 each bind 3',5'-cyclic GMP; these read GELA, RT, GEKA, and RS. A cGMP-binding, high affinity; cAMP-binding, low affinity region spans residues 286–416; the sequence is LLKNLPEDKL…NLNRDDEKRH (131 aa). Position 431 is a phosphoserine (serine 431). In terms of domain architecture, Protein kinase spans 453–711; it reads LEIIATLGVG…INDIKKHRWL (259 aa). ATP contacts are provided by residues 459-467 and lysine 482; that span reads LGVGGFGRV. The active-site Proton acceptor is aspartate 576. Threonine 609 carries the phosphothreonine modification. In terms of domain architecture, AGC-kinase C-terminal spans 712-762; the sequence is NGFNWEGLKARSLPSPLQRELKGPIDHSYFDKYPPEKGMPPDELSGWDKDF. Positions 740–762 are disordered; sequence YFDKYPPEKGMPPDELSGWDKDF.

Belongs to the protein kinase superfamily. AGC Ser/Thr protein kinase family. cGMP subfamily. Interacts with GRIA1/GLUR1. Post-translationally, myristoylation mediates membrane localization. Highly concentrated in brain, lung and intestinal mucosa.

The protein resides in the apical cell membrane. It carries out the reaction L-seryl-[protein] + ATP = O-phospho-L-seryl-[protein] + ADP + H(+). The enzyme catalyses L-threonyl-[protein] + ATP = O-phospho-L-threonyl-[protein] + ADP + H(+). With respect to regulation, binding of cGMP results in enzyme activation. Functionally, crucial regulator of intestinal secretion and bone growth. Phosphorylates and activates CFTR on the plasma membrane. Plays a key role in intestinal secretion by regulating cGMP-dependent translocation of CFTR in jejunum. Acts downstream of NMDAR to activate the plasma membrane accumulation of GRIA1/GLUR1 in synapse and increase synaptic plasticity. Phosphorylates GRIA1/GLUR1 at Ser-863. Acts as a regulator of gene expression and activator of the extracellular signal-regulated kinases MAPK3/ERK1 and MAPK1/ERK2 in mechanically stimulated osteoblasts. Under fluid shear stress, mediates ERK activation and subsequent induction of FOS, FOSL1/FRA1, FOSL2/FRA2 and FOSB that play a key role in the osteoblast anabolic response to mechanical stimulation. The chain is cGMP-dependent protein kinase 2 (PRKG2) from Homo sapiens (Human).